A 203-amino-acid polypeptide reads, in one-letter code: Guanylate kinase (203 aa).

In terms of domain architecture, Guanylate kinase-like spans 3-181 (GSLFIVAAPS…AHTDLRAIVQ (179 aa)). 10–17 (APSGAGKT) lines the ATP pocket.

The protein belongs to the guanylate kinase family.

It is found in the cytoplasm. The catalysed reaction is GMP + ATP = GDP + ADP. Its function is as follows. Essential for recycling GMP and indirectly, cGMP. The polypeptide is Guanylate kinase (Nitrosococcus oceani (strain ATCC 19707 / BCRC 17464 / JCM 30415 / NCIMB 11848 / C-107)).